We begin with the raw amino-acid sequence, 178 residues long: MALKELFDRDWQELESEGVLFSTLEKLVAWGRSNSLWPATFGLACCAIEMMSSTDGRNDLSRFGSEVFRASPRQADVMIVAGRLSKKMAPIMRRVYDQMPDPKWVISMGACASSGGMFNNYAVVQNVDHVVPVDVFVPGCPPRPEALIYAVMQLQKKVRGEAYDARGEQLPMVEAWTR.

Residues Cys-45, Cys-46, Cys-111, and Cys-140 each contribute to the [4Fe-4S] cluster site.

The protein belongs to the complex I 20 kDa subunit family. NDH-1 is composed of 15 different subunits. Subunits NuoB, C, D, E, F, and G constitute the peripheral sector of the complex. [4Fe-4S] cluster serves as cofactor.

The protein localises to the cell membrane. The catalysed reaction is a quinone + NADH + 5 H(+)(in) = a quinol + NAD(+) + 4 H(+)(out). In terms of biological role, NDH-1 shuttles electrons from NADH, via FMN and iron-sulfur (Fe-S) centers, to quinones in the respiratory chain. The immediate electron acceptor for the enzyme in this species is believed to be a menaquinone. Couples the redox reaction to proton translocation (for every two electrons transferred, four hydrogen ions are translocated across the cytoplasmic membrane), and thus conserves the redox energy in a proton gradient. The polypeptide is NADH-quinone oxidoreductase subunit B (Deinococcus geothermalis (strain DSM 11300 / CIP 105573 / AG-3a)).